Reading from the N-terminus, the 100-residue chain is MIREERLLKVLRAPHVSEKASAAMEKSNTIVLKVAKDATKAEIKAAVQKLFEVEVEVVNTLVVKGKTKRHGQRIGRRSDWKKAYVTLKEGQNLDFVGGAE.

This sequence belongs to the universal ribosomal protein uL23 family. In terms of assembly, part of the 50S ribosomal subunit. Contacts protein L29, and trigger factor when it is bound to the ribosome.

One of the early assembly proteins it binds 23S rRNA. One of the proteins that surrounds the polypeptide exit tunnel on the outside of the ribosome. Forms the main docking site for trigger factor binding to the ribosome. The polypeptide is Large ribosomal subunit protein uL23 (Pectobacterium atrosepticum (strain SCRI 1043 / ATCC BAA-672) (Erwinia carotovora subsp. atroseptica)).